A 61-amino-acid polypeptide reads, in one-letter code: Conotoxin 3 (61 aa).

An N-terminal signal peptide occupies residues 1 to 21 (MRCLPVFVILLLLIASVPSDA). A propeptide spanning residues 22 to 48 (VQLKTKDDMPLPSFNGNARRTPRMLSN) is cleaved from the precursor. Trp58 carries the post-translational modification 6'-bromotryptophan.

It belongs to the conotoxin T superfamily. Post-translationally, contains 2 disulfide bonds that can be either 'C1-C3, C2-C4' or 'C1-C4, C2-C3', since these disulfide connectivities have been observed for conotoxins with cysteine framework V (for examples, see AC P0DQQ7 and AC P81755). Contains 2 disulfide bonds. As to expression, expressed by the venom duct.

The protein localises to the secreted. The polypeptide is Conotoxin 3 (Conus textile (Cloth-of-gold cone)).